We begin with the raw amino-acid sequence, 150 residues long: uncharacterized protein (150 aa).

To A.tumefaciens conjugal transfer protein TraB.

This is an uncharacterized protein from Agrobacterium tumefaciens (strain 15955).